Consider the following 227-residue polypeptide: ATP synthase F(0) complex subunit a (227 aa).

The next 6 membrane-spanning stretches (helical) occupy residues 14-34 (YLGIPLIAIAIALPWVLFPLP), 69-89 (WALLLASLMVFLITINMLGLL), 98-118 (QLSLNMGLAIPLWLATVIIGL), 132-152 (EGTPLPLIPVLIIIETISLFI), 179-199 (VFVLLPMMPTVAILTATVLFL), and 202-222 (LLEVAVAMIQAYVFVLLLSLY).

It belongs to the ATPase A chain family. Component of the ATP synthase complex composed at least of ATP5F1A/subunit alpha, ATP5F1B/subunit beta, ATP5MC1/subunit c (homooctomer), MT-ATP6/subunit a, MT-ATP8/subunit 8, ATP5ME/subunit e, ATP5MF/subunit f, ATP5MG/subunit g, ATP5MK/subunit k, ATP5MJ/subunit j, ATP5F1C/subunit gamma, ATP5F1D/subunit delta, ATP5F1E/subunit epsilon, ATP5PF/subunit F6, ATP5PB/subunit b, ATP5PD/subunit d, ATP5PO/subunit OSCP. ATP synthase complex consists of a soluble F(1) head domain (subunits alpha(3) and beta(3)) - the catalytic core - and a membrane F(0) domain - the membrane proton channel (subunits c, a, 8, e, f, g, k and j). These two domains are linked by a central stalk (subunits gamma, delta, and epsilon) rotating inside the F1 region and a stationary peripheral stalk (subunits F6, b, d, and OSCP). Interacts with DNAJC30; interaction is direct.

It is found in the mitochondrion inner membrane. The enzyme catalyses H(+)(in) = H(+)(out). Functionally, subunit a, of the mitochondrial membrane ATP synthase complex (F(1)F(0) ATP synthase or Complex V) that produces ATP from ADP in the presence of a proton gradient across the membrane which is generated by electron transport complexes of the respiratory chain. ATP synthase complex consist of a soluble F(1) head domain - the catalytic core - and a membrane F(1) domain - the membrane proton channel. These two domains are linked by a central stalk rotating inside the F(1) region and a stationary peripheral stalk. During catalysis, ATP synthesis in the catalytic domain of F(1) is coupled via a rotary mechanism of the central stalk subunits to proton translocation. With the subunit c (ATP5MC1), forms the proton-conducting channel in the F(0) domain, that contains two crucial half-channels (inlet and outlet) that facilitate proton movement from the mitochondrial intermembrane space (IMS) into the matrix. Protons are taken up via the inlet half-channel and released through the outlet half-channel, following a Grotthuss mechanism. The polypeptide is ATP synthase F(0) complex subunit a (Formosania lacustris (Oriental stream loach)).